A 291-amino-acid polypeptide reads, in one-letter code: Bifunctional protein FolD (291 aa).

Residues 166 to 168 (GAG), Ile-191, and Ile-232 each bind NADP(+).

This sequence belongs to the tetrahydrofolate dehydrogenase/cyclohydrolase family. Homodimer.

It carries out the reaction (6R)-5,10-methylene-5,6,7,8-tetrahydrofolate + NADP(+) = (6R)-5,10-methenyltetrahydrofolate + NADPH. It catalyses the reaction (6R)-5,10-methenyltetrahydrofolate + H2O = (6R)-10-formyltetrahydrofolate + H(+). It functions in the pathway one-carbon metabolism; tetrahydrofolate interconversion. Functionally, catalyzes the oxidation of 5,10-methylenetetrahydrofolate to 5,10-methenyltetrahydrofolate and then the hydrolysis of 5,10-methenyltetrahydrofolate to 10-formyltetrahydrofolate. The sequence is that of Bifunctional protein FolD from Aquifex aeolicus (strain VF5).